Here is a 129-residue protein sequence, read N- to C-terminus: Large ribosomal subunit protein uL22 (129 aa).

This sequence belongs to the universal ribosomal protein uL22 family. In terms of assembly, part of the 50S ribosomal subunit.

This protein binds specifically to 23S rRNA; its binding is stimulated by other ribosomal proteins, e.g. L4, L17, and L20. It is important during the early stages of 50S assembly. It makes multiple contacts with different domains of the 23S rRNA in the assembled 50S subunit and ribosome. Functionally, the globular domain of the protein is located near the polypeptide exit tunnel on the outside of the subunit, while an extended beta-hairpin is found that lines the wall of the exit tunnel in the center of the 70S ribosome. The sequence is that of Large ribosomal subunit protein uL22 from Aster yellows witches'-broom phytoplasma (strain AYWB).